Consider the following 226-residue polypeptide: dTTP/UTP pyrophosphatase (226 aa).

Residue aspartate 85 is the Proton acceptor of the active site.

This sequence belongs to the Maf family. YhdE subfamily. The cofactor is a divalent metal cation.

It is found in the cytoplasm. The catalysed reaction is dTTP + H2O = dTMP + diphosphate + H(+). It carries out the reaction UTP + H2O = UMP + diphosphate + H(+). Nucleoside triphosphate pyrophosphatase that hydrolyzes dTTP and UTP. May have a dual role in cell division arrest and in preventing the incorporation of modified nucleotides into cellular nucleic acids. The protein is dTTP/UTP pyrophosphatase of Psychrobacter cryohalolentis (strain ATCC BAA-1226 / DSM 17306 / VKM B-2378 / K5).